A 1593-amino-acid chain; its full sequence is Autotransporter CRAC (1593 aa).

The first 54 residues, 1–54, serve as a signal peptide directing secretion; sequence MNKVYNTVWNESTGMWVVTSELTRKGGRRPRQIRRTALAGLIAGLLLPSAPALA. A compositionally biased stretch (polar residues) spans 65–85; the sequence is GATSSSMSLNAGDTATDTTIN. 2 disordered regions span residues 65–100 and 1267–1286; these read GATS…SATS and KADS…PVPP. Over residues 86–97 the composition is skewed to low complexity; sequence SGGSQRVSSGGS. The span at 1269–1280 shows a compositional bias: polar residues; it reads DSSQPGTDNPGT. Residues 1325–1593 enclose the Autotransporter domain; that stretch reads NTRSPGGVWG…TGSVGFRINF (269 aa).

Post-translationally, glycosylated by heptosyltransferas BAHTCr. Glycosylation is required for adhesion to mammalian cells and colonization of the mouse host gastrointestinal tract.

The protein localises to the cell outer membrane. Functionally, autotransporter required for the colonization of the mouse host gastrointestinal tract, possibly by mediating bacteria adhesion to host cells. The protein is Autotransporter CRAC of Citrobacter rodentium (strain ICC168) (Citrobacter freundii biotype 4280).